Consider the following 229-residue polypeptide: Peptidase E (229 aa).

Residues S120, D135, and H157 each act as charge relay system in the active site.

This sequence belongs to the peptidase S51 family.

The protein localises to the cytoplasm. It carries out the reaction Dipeptidase E catalyzes the hydrolysis of dipeptides Asp-|-Xaa. It does not act on peptides with N-terminal Glu, Asn or Gln, nor does it cleave isoaspartyl peptides.. Hydrolyzes dipeptides containing N-terminal aspartate residues. May play a role in allowing the cell to use peptide aspartate to spare carbon otherwise required for the synthesis of the aspartate family of amino acids. This Salmonella paratyphi C (strain RKS4594) protein is Peptidase E.